The following is a 485-amino-acid chain: ATP-dependent 6-phosphofructokinase 7 (485 aa).

ATP contacts are provided by residues Gly-101, 164–165, and 189–192; these read RG and GDGT. Mg(2+) is bound at residue Asp-190. Residues 218-220, 263-265, Glu-319, and 374-377 each bind substrate; these read TID, MGR, and YMIR. Asp-220 functions as the Proton acceptor in the catalytic mechanism. The interval 449–485 is disordered; that stretch reads SFLGPKDTSEEKKELPETPLLDDGAVDIPPVTKEVTK. Positions 455 to 464 are enriched in basic and acidic residues; the sequence is DTSEEKKELP.

The protein belongs to the phosphofructokinase type A (PFKA) family. PPi-dependent PFK group II subfamily. Atypical ATP-dependent clade 'X' sub-subfamily. As to quaternary structure, homotetramer. Requires Mg(2+) as cofactor. As to expression, expressed in roots, leaves, stems and flowers.

It is found in the cytoplasm. The catalysed reaction is beta-D-fructose 6-phosphate + ATP = beta-D-fructose 1,6-bisphosphate + ADP + H(+). It functions in the pathway carbohydrate degradation; glycolysis; D-glyceraldehyde 3-phosphate and glycerone phosphate from D-glucose: step 3/4. Its activity is regulated as follows. Allosterically activated by AMP. In terms of biological role, catalyzes the phosphorylation of D-fructose 6-phosphate to fructose 1,6-bisphosphate by ATP, the first committing step of glycolysis. In Arabidopsis thaliana (Mouse-ear cress), this protein is ATP-dependent 6-phosphofructokinase 7.